The chain runs to 57 residues: Large ribosomal subunit protein bL32 (57 aa).

The interval 1–21 (MAVQQRRSSKHRRDKRRSHDA) is disordered. Residues 7–18 (RSSKHRRDKRRS) are compositionally biased toward basic residues.

It belongs to the bacterial ribosomal protein bL32 family.

The polypeptide is Large ribosomal subunit protein bL32 (rpmF) (Mycoplasma pneumoniae (strain ATCC 29342 / M129 / Subtype 1) (Mycoplasmoides pneumoniae)).